A 1057-amino-acid polypeptide reads, in one-letter code: Self-sufficient cytochrome P450 monooxygenase CYP505E3 (1057 aa).

Cys403 contacts heme. The disordered stretch occupies residues 465–488 (PSAAPFSSHARETTNASLPASPGT). Positions 494 to 634 (MYVLYGSNTG…AFEAWETKLW (141 aa)) constitute a Flavodoxin-like domain. FMN is bound by residues 500-504 (SNTGT) and 578-610 (VFGCGHHDWFRTYQRIPKLIDQTLEDRGAQRLV). An FAD-binding FR-type domain is found at 671–900 (HDAALGTVIE…RASNAAFHLP (230 aa)).

The protein in the N-terminal section; belongs to the cytochrome P450 family. FAD is required as a cofactor. It depends on FMN as a cofactor. The cofactor is heme.

The enzyme catalyses 2 oxidized [cytochrome P450] + NADPH = 2 reduced [cytochrome P450] + NADP(+) + H(+). It carries out the reaction an organic molecule + reduced [NADPH--hemoprotein reductase] + O2 = an alcohol + oxidized [NADPH--hemoprotein reductase] + H2O + H(+). The catalysed reaction is dodecan-1-ol + reduced [NADPH--hemoprotein reductase] + O2 = 1,5-dodecanediol + oxidized [NADPH--hemoprotein reductase] + H2O + H(+). It catalyses the reaction dodecan-1-ol + reduced [NADPH--hemoprotein reductase] + O2 = 1,6-dodecanediol + oxidized [NADPH--hemoprotein reductase] + H2O + H(+). In terms of biological role, self-sufficient cytochrome P450 monooxygenase that catalyzes the regioselective in-chain hydroxylation of fatty alcohols (C9-15) as well as fatty acids (C9-15) at the omega-1 to omega-7 or omega-1 to omega-6 positions, respectively. Is also able to convert naphthalene to 1-naphthol and 1-naphthol further to 1,3-dihydroxynaphthalene. In Phanerodontia chrysosporium (White-rot fungus), this protein is Self-sufficient cytochrome P450 monooxygenase CYP505E3.